The primary structure comprises 301 residues: uncharacterized protein (301 aa).

The Charge relay system role is filled by Thr47. The active-site Proton donor is Tyr136. The active-site Schiff-base intermediate with substrate is the Lys165.

The protein belongs to the DapA family. As to quaternary structure, homotetramer.

It localises to the cytoplasm. This is an uncharacterized protein from Thermofilum pendens (strain DSM 2475 / Hrk 5).